The sequence spans 206 residues: 3-demethoxyubiquinol 3-hydroxylase (206 aa).

Fe cation-binding residues include Glu-55, Glu-85, His-88, Glu-137, Glu-169, and His-172.

This sequence belongs to the COQ7 family. The cofactor is Fe cation.

Its subcellular location is the cell membrane. The catalysed reaction is a 5-methoxy-2-methyl-3-(all-trans-polyprenyl)benzene-1,4-diol + AH2 + O2 = a 3-demethylubiquinol + A + H2O. The protein operates within cofactor biosynthesis; ubiquinone biosynthesis. Catalyzes the hydroxylation of 2-nonaprenyl-3-methyl-6-methoxy-1,4-benzoquinol during ubiquinone biosynthesis. In Chromobacterium violaceum (strain ATCC 12472 / DSM 30191 / JCM 1249 / CCUG 213 / NBRC 12614 / NCIMB 9131 / NCTC 9757 / MK), this protein is 3-demethoxyubiquinol 3-hydroxylase.